The primary structure comprises 384 residues: Transcriptional regulator of the unfolded protein response hacA (384 aa).

The segment covering 1–18 (MTESTFAVETFSMDSMSP) has biased composition (polar residues). 2 disordered regions span residues 1–27 (MTESTFAVETFSMDSMSPSPGAEIPRL) and 41–94 (LVPE…QRRI). Over residues 84-94 (KTEDEKEQRRI) the composition is skewed to basic and acidic residues. A bZIP domain is found at 90-153 (EQRRIERVLR…NRLSQQVAKL (64 aa)). The segment at 92–101 (RRIERVLRNR) is basic motif. The tract at residues 106 to 113 (ISRERKRL) is leucine-zipper. Disordered regions lie at residues 208–256 (SIPF…PSDL) and 331–384 (PDED…AGAQ). Residues 218–240 (STTTTTTTTTTTSNNISSTSSTT) show a composition bias toward low complexity.

It belongs to the bZIP family.

Its subcellular location is the nucleus. Functionally, master transcriptional regulator of the unfolded protein response (UPR) that recognizes and binds to the UPR element (UPRE) in the promoter of UPR-regulated genes. Exposure to antifungals and ER-stressing agents initiates the activation of hacA which occurs when a 20 nucleotide fragment is removed from part of the exon-2 and part of intron-2, which in turn promotes the arisen of the DNA binding site motif and a dimer interface domain. Modulates the expression of genes related to cell wall synthesis, ergosterol biosynthesis, pigmentation, heat shock proteins, and the genes coding for mannosyltransferase enzymes. Plays a key role in both response to stress and host-pathogen interaction. The sequence is that of Transcriptional regulator of the unfolded protein response hacA from Trichophyton rubrum (strain ATCC MYA-4607 / CBS 118892) (Athlete's foot fungus).